We begin with the raw amino-acid sequence, 253 residues long: DNA repair protein RecO (253 aa).

This sequence belongs to the RecO family.

Its function is as follows. Involved in DNA repair and RecF pathway recombination. In Streptococcus agalactiae serotype III (strain NEM316), this protein is DNA repair protein RecO.